The following is a 693-amino-acid chain: UvrABC system protein C (693 aa).

The region spanning 16 to 95 (DAPGVYRFRD…IKEFDPRFNV (80 aa)) is the GIY-YIG domain. The UVR domain occupies 208–243 (GVFLRRLESEMAAASAELDFERAARVRDDINALRRV). The tract at residues 656-693 (APSPDDATTEPGAVGEPGTADGAAADPDGRDAVVVPEG) is disordered. The span at 672 to 693 (PGTADGAAADPDGRDAVVVPEG) shows a compositional bias: low complexity.

Belongs to the UvrC family. Interacts with UvrB in an incision complex.

It is found in the cytoplasm. In terms of biological role, the UvrABC repair system catalyzes the recognition and processing of DNA lesions. UvrC both incises the 5' and 3' sides of the lesion. The N-terminal half is responsible for the 3' incision and the C-terminal half is responsible for the 5' incision. In Beutenbergia cavernae (strain ATCC BAA-8 / DSM 12333 / CCUG 43141 / JCM 11478 / NBRC 16432 / NCIMB 13614 / HKI 0122), this protein is UvrABC system protein C.